We begin with the raw amino-acid sequence, 489 residues long: Acetyl-coenzyme A carboxylase carboxyl transferase subunit beta, chloroplastic (489 aa).

Residues 225-489 enclose the CoA carboxyltransferase N-terminal domain; it reads LWIQCDNCYG…FFPLNKNEIK (265 aa). Zn(2+) is bound by residues cysteine 229, cysteine 232, cysteine 245, and cysteine 248. Residues 229-248 form a C4-type zinc finger; the sequence is CDNCYGLKYKKVEMNVCEEC.

The protein belongs to the AccD/PCCB family. Acetyl-CoA carboxylase is a heterohexamer composed of biotin carboxyl carrier protein, biotin carboxylase and 2 subunits each of ACCase subunit alpha and ACCase plastid-coded subunit beta (accD). It depends on Zn(2+) as a cofactor.

It localises to the plastid. It is found in the chloroplast stroma. The enzyme catalyses N(6)-carboxybiotinyl-L-lysyl-[protein] + acetyl-CoA = N(6)-biotinyl-L-lysyl-[protein] + malonyl-CoA. Its pathway is lipid metabolism; malonyl-CoA biosynthesis; malonyl-CoA from acetyl-CoA: step 1/1. Functionally, component of the acetyl coenzyme A carboxylase (ACC) complex. Biotin carboxylase (BC) catalyzes the carboxylation of biotin on its carrier protein (BCCP) and then the CO(2) group is transferred by the transcarboxylase to acetyl-CoA to form malonyl-CoA. In Brassica napus (Rape), this protein is Acetyl-coenzyme A carboxylase carboxyl transferase subunit beta, chloroplastic.